Here is an 82-residue protein sequence, read N- to C-terminus: Turripeptide IX-07 (82 aa).

An N-terminal signal peptide occupies residues 1 to 21 (MGFYMLLTVALLLTSLMNVEA). Positions 22 to 39 (TPVNQAERSALEKSGLGN) are excised as a propeptide. Intrachain disulfides connect Cys-48–Cys-70, Cys-55–Cys-74, and Cys-60–Cys-81.

As to expression, expressed by the venom duct.

It is found in the secreted. In Gemmula speciosa (Splendid gem-turris), this protein is Turripeptide IX-07.